A 206-amino-acid chain; its full sequence is MAGLHFFPALLALLMASLQTHQGFPMPSLSSLLSNAVQRANYLHNLAGDRYRDFEQNYISDEQRHSIKNSPAAYCYSESSPAPTGKEDARQKSDMDLLRFSLSLIQAWISPLQILGRPFGSPDAYDKLLDLEKGLQVLMRELEDGSSRGLSLLKHTYDKFSANQFSEEATLKNYSLLACFKKDMHKVETYLRVMKCRRFPESNCTI.

Positions 1–22 (MAGLHFFPALLALLMASLQTHQ) are cleaved as a signal peptide. Cystine bridges form between Cys-75/Cys-179 and Cys-196/Cys-204.

It belongs to the somatotropin/prolactin family.

It is found in the secreted. Functionally, growth hormone plays an important role in growth control and is involved in the regulation of several anabolic processes. Implicated as an osmoregulatory substance important for seawater adaptation. The protein is Somatotropin (gh) of Protopterus annectens (African lungfish).